Reading from the N-terminus, the 153-residue chain is Cytochrome c oxidase subunit 5A, mitochondrial (153 aa).

The transit peptide at 1 to 20 directs the protein to the mitochondrion; it reads MLRNTFTRAGGLSRITSVRF. The Mitochondrial matrix segment spans residues 21–88; that stretch reads AQTHALSNAA…EWGPRRPVLN (68 aa). A helical membrane pass occupies residues 89–111; the sequence is KGDSSFIAKGVAAGLLFSVGLFA. Residues 112–153 are Mitochondrial intermembrane-facing; that stretch reads VVRMAGGQDAKTMNKEWQLKSDEYLKSKNANPWGGYSQVQSK.

This sequence belongs to the cytochrome c oxidase IV family. In terms of assembly, component of the cytochrome c oxidase (complex IV, CIV), a multisubunit enzyme composed of 12 subunits. The complex is composed of a catalytic core of 3 subunits COX1, COX2 and COX3, encoded in the mitochondrial DNA, and 9 supernumerary subunits COX4, COX5A (or COX5B), COX6, COX7, COX8, COX9, COX12, COX13 and COX26, which are encoded in the nuclear genome. COX5A is the predominant subunit V during aerobic/normoxic growth, it gets replaced by COX5B under anaerobic/hypoxic conditions. The complex exists as a monomer or a dimer and forms supercomplexes (SCs) in the inner mitochondrial membrane with a dimer of ubiquinol-cytochrome c oxidoreductase (cytochrome b-c1 complex, complex III, CIII), resulting in 2 different assemblies (supercomplexes III(2)IV and III(2)IV(2)). COX5A interacts with COR1, CYT1 and QCR6 at the CIII-CIV interface.

It localises to the mitochondrion inner membrane. It functions in the pathway energy metabolism; oxidative phosphorylation. Functionally, component of the cytochrome c oxidase, the last enzyme in the mitochondrial electron transport chain which drives oxidative phosphorylation. The respiratory chain contains 3 multisubunit complexes succinate dehydrogenase (complex II, CII), ubiquinol-cytochrome c oxidoreductase (cytochrome b-c1 complex, complex III, CIII) and cytochrome c oxidase (complex IV, CIV), that cooperate to transfer electrons derived from NADH and succinate to molecular oxygen, creating an electrochemical gradient over the inner membrane that drives transmembrane transport and the ATP synthase. Cytochrome c oxidase is the component of the respiratory chain that catalyzes the reduction of oxygen to water. Electrons originating from reduced cytochrome c in the intermembrane space (IMS) are transferred via the dinuclear copper A center (CU(A)) of COX2 and heme A of COX1 to the active site in COX1, a binuclear center (BNC) formed by heme A3 and copper B (CU(B)). The BNC reduces molecular oxygen to 2 water molecules using 4 electrons from cytochrome c in the IMS and 4 protons from the mitochondrial matrix. The protein is Cytochrome c oxidase subunit 5A, mitochondrial (COX5A) of Saccharomyces cerevisiae (strain ATCC 204508 / S288c) (Baker's yeast).